We begin with the raw amino-acid sequence, 722 residues long: Mesentericin-Y105 transport/processing ATP-binding protein MesD (722 aa).

The 128-residue stretch at 16–143 (QVDERDCGVA…EEWTGVSIFI (128 aa)) folds into the Peptidase C39 domain. Residue Cys22 is part of the active site. 8 consecutive transmembrane segments (helical) span residues 171–191 (LLVINIVIAALLVTLVSILGS), 210–230 (LGIVSLGLIFAYVIQQLLSYA), 242–262 (LSIDIILSYIKHIFELPMSFF), 287–307 (TMLSVFLDLGILVIVGTVLVV), 311–331 (TLFLISLIAIPAYALVVWLFM), 401–421 (SLLQLSLNVVILWVGAQLVMT), 429–449 (LITYNALLGFFTDPLQNIINL), and 518–538 (IALVGISGSGKSTLVKLLVNF). Positions 173 to 455 (VINIVIAALL…IINLQTKLQQ (283 aa)) constitute an ABC transmembrane type-1 domain. One can recognise an ABC transporter domain in the interval 489-722 (LVADHITYKY…GGFYASLFNH (234 aa)). 522–529 (GISGSGKS) provides a ligand contact to ATP.

This sequence belongs to the ABC transporter superfamily.

Its subcellular location is the cell membrane. Functionally, involved in the export process of the bacteriocin mesentericin-Y105. The protein is Mesentericin-Y105 transport/processing ATP-binding protein MesD (mesD) of Leuconostoc mesenteroides.